The primary structure comprises 475 residues: uncharacterized protein (475 aa).

A disordered region spans residues 42-292; that stretch reads NLQNSLTGKT…NTRKGQRHNN (251 aa). 2 stretches are compositionally biased toward basic and acidic residues: residues 59 to 72 and 119 to 134; these read EANH…KSED and IAEK…DDSQ. Composition is skewed to polar residues over residues 150 to 159 and 220 to 242; these read ITPNFTHTPI and NNTF…TSED. The segment covering 243-263 has biased composition (low complexity); it reads SSSQAPHHSSSSGHAPSQQGG. The segment covering 277-289 has biased composition (basic residues); that stretch reads FHHKGRNTRKGQR. An HTH La-type RNA-binding domain is found at 319 to 408; the sequence is NPYLCDVQAF…MSIKVRRKET (90 aa). The residue at position 408 (Thr-408) is a Phosphothreonine. Residue Ser-410 is modified to Phosphoserine.

It localises to the cytoplasm. This is an uncharacterized protein from Schizosaccharomyces pombe (strain 972 / ATCC 24843) (Fission yeast).